The primary structure comprises 399 residues: Bombesin receptor subtype-3 (399 aa).

The Extracellular segment spans residues 1 to 41 (MAQRQPHSPNQTLISITNDTESSSSVVSNDNTNKGWSGDNS). Residues asparagine 10 and asparagine 18 are each glycosylated (N-linked (GlcNAc...) asparagine). The helical transmembrane segment at 42–63 (PGIEALCAIYITYAVIISVGIL) threads the bilayer. The Cytoplasmic portion of the chain corresponds to 64–82 (GNAILIKVFFKTKSMQTVP). A helical membrane pass occupies residues 83 to 103 (NIFITSLAFGDLLLLLTCVPV). Over 104–121 (DATHYLAEGWLFGRIGCK) the chain is Extracellular. The cysteines at positions 120 and 203 are disulfide-linked. Residues 122-143 (VLSFIRLTSVGVSVFTLTILSA) traverse the membrane as a helical segment. Residues 144-163 (DRYKAVVKPLERQPSNAILK) lie on the Cytoplasmic side of the membrane. A helical membrane pass occupies residues 164 to 184 (TCVKAGCVWIVSMIFALPEAI). Residues 185-220 (FSNVYTFRDPNKNMTFESCTSYPVSKKLLQEIHSLL) lie on the Extracellular side of the membrane. A helical membrane pass occupies residues 221-241 (CFLVFYIIPLSIISVYYSLIA). Topologically, residues 242 to 272 (RTLYKSTLNIPTEEQSHARKQIESRKRIART) are cytoplasmic. A helical transmembrane segment spans residues 273–293 (VLVLVALFALCWLPNHLLYLY). Residues 294–313 (HSFTSQTYVDPSAMHFIFTI) are Extracellular-facing. A helical membrane pass occupies residues 314 to 333 (FSRVLAFSNSCVNPFALYWL). The Cytoplasmic portion of the chain corresponds to 334–399 (SKSFQKHFKA…CSVKQAEDRF (66 aa)). Cysteine 347 is lipidated: S-palmitoyl cysteine.

The protein belongs to the G-protein coupled receptor 1 family. As to quaternary structure, interacts with C6orf89. As to expression, in germ cells in testis. Lung carcinoma cells.

It is found in the cell membrane. In terms of biological role, role in sperm cell division, maturation, or function. This receptor mediates its action by association with G proteins that activate a phosphatidylinositol-calcium second messenger system. The protein is Bombesin receptor subtype-3 (BRS3) of Homo sapiens (Human).